Reading from the N-terminus, the 342-residue chain is RNA 3'-terminal phosphate cyclase (342 aa).

ATP contacts are provided by residues Gln-100 and 283–287 (FLGDQ). The Tele-AMP-histidine intermediate role is filled by His-307.

This sequence belongs to the RNA 3'-terminal cyclase family. Type 1 subfamily.

Its subcellular location is the cytoplasm. The catalysed reaction is a 3'-end 3'-phospho-ribonucleotide-RNA + ATP = a 3'-end 2',3'-cyclophospho-ribonucleotide-RNA + AMP + diphosphate. Catalyzes the conversion of 3'-phosphate to a 2',3'-cyclic phosphodiester at the end of RNA. The mechanism of action of the enzyme occurs in 3 steps: (A) adenylation of the enzyme by ATP; (B) transfer of adenylate to an RNA-N3'P to produce RNA-N3'PP5'A; (C) and attack of the adjacent 2'-hydroxyl on the 3'-phosphorus in the diester linkage to produce the cyclic end product. The biological role of this enzyme is unknown but it is likely to function in some aspects of cellular RNA processing. This Pyrococcus abyssi (strain GE5 / Orsay) protein is RNA 3'-terminal phosphate cyclase (rtcA).